A 148-amino-acid polypeptide reads, in one-letter code: Macrodomain Ter protein (148 aa).

Belongs to the MatP family. Homodimer.

The protein localises to the cytoplasm. Functionally, required for spatial organization of the terminus region of the chromosome (Ter macrodomain) during the cell cycle. Prevents early segregation of duplicated Ter macrodomains during cell division. Binds specifically to matS, which is a 13 bp signature motif repeated within the Ter macrodomain. The chain is Macrodomain Ter protein from Photobacterium profundum (strain SS9).